The primary structure comprises 690 residues: Elongation factor G (690 aa).

One can recognise a tr-type G domain in the interval 8 to 282 (DKVRNIGIMA…AIVNYLPSPL (275 aa)). GTP-binding positions include 17 to 24 (AHIDAGKT), 81 to 85 (DTPGH), and 135 to 138 (NKMD).

This sequence belongs to the TRAFAC class translation factor GTPase superfamily. Classic translation factor GTPase family. EF-G/EF-2 subfamily.

The protein localises to the cytoplasm. Its function is as follows. Catalyzes the GTP-dependent ribosomal translocation step during translation elongation. During this step, the ribosome changes from the pre-translocational (PRE) to the post-translocational (POST) state as the newly formed A-site-bound peptidyl-tRNA and P-site-bound deacylated tRNA move to the P and E sites, respectively. Catalyzes the coordinated movement of the two tRNA molecules, the mRNA and conformational changes in the ribosome. The polypeptide is Elongation factor G (Caldanaerobacter subterraneus subsp. tengcongensis (strain DSM 15242 / JCM 11007 / NBRC 100824 / MB4) (Thermoanaerobacter tengcongensis)).